Reading from the N-terminus, the 317-residue chain is Probable cell division protein WhiA (317 aa).

Residues 275 to 308 (SLKELGEMLVPKVGKSGVNHRMRKIDELAEKLEE) constitute a DNA-binding region (H-T-H motif).

This sequence belongs to the WhiA family.

Involved in cell division and chromosome segregation. The chain is Probable cell division protein WhiA from Desulfitobacterium hafniense (strain DSM 10664 / DCB-2).